A 187-amino-acid chain; its full sequence is Transmembrane protein 11-A, mitochondrial (187 aa).

A run of 2 helical transmembrane segments spans residues 79 to 95 (TAVL…LALP) and 102 to 119 (VSLP…LYGI).

The protein belongs to the TMEM11 family.

It is found in the mitochondrion inner membrane. Plays a role in mitochondrial morphogenesis. The protein is Transmembrane protein 11-A, mitochondrial (tmem11-a) of Xenopus laevis (African clawed frog).